A 249-amino-acid chain; its full sequence is Diaminopimelate epimerase (249 aa).

The substrate site is built by N11 and N60. The active-site Proton donor is C69. Substrate is bound by residues 70–71 (GN), N164, and 182–183 (ER). The active-site Proton acceptor is the C192. 193–194 (GT) contributes to the substrate binding site.

Belongs to the diaminopimelate epimerase family. As to quaternary structure, homodimer.

It is found in the cytoplasm. It carries out the reaction (2S,6S)-2,6-diaminopimelate = meso-2,6-diaminopimelate. Its pathway is amino-acid biosynthesis; L-lysine biosynthesis via DAP pathway; DL-2,6-diaminopimelate from LL-2,6-diaminopimelate: step 1/1. Functionally, catalyzes the stereoinversion of LL-2,6-diaminopimelate (L,L-DAP) to meso-diaminopimelate (meso-DAP), a precursor of L-lysine and an essential component of the bacterial peptidoglycan. This Campylobacter jejuni subsp. doylei (strain ATCC BAA-1458 / RM4099 / 269.97) protein is Diaminopimelate epimerase.